The sequence spans 412 residues: Gamma-glutamyl phosphate reductase (412 aa).

This sequence belongs to the gamma-glutamyl phosphate reductase family.

It localises to the cytoplasm. The catalysed reaction is L-glutamate 5-semialdehyde + phosphate + NADP(+) = L-glutamyl 5-phosphate + NADPH + H(+). Its pathway is amino-acid biosynthesis; L-proline biosynthesis; L-glutamate 5-semialdehyde from L-glutamate: step 2/2. Functionally, catalyzes the NADPH-dependent reduction of L-glutamate 5-phosphate into L-glutamate 5-semialdehyde and phosphate. The product spontaneously undergoes cyclization to form 1-pyrroline-5-carboxylate. The protein is Gamma-glutamyl phosphate reductase of Lactiplantibacillus plantarum (strain ATCC BAA-793 / NCIMB 8826 / WCFS1) (Lactobacillus plantarum).